The chain runs to 322 residues: Rhomboid-like protein 16, chloroplastic (322 aa).

The transit peptide at 1-52 directs the protein to the chloroplast; it reads MHAIFCRRVAVGCSSPQLTKLVTKQASQSRHSLSHLLPFDLSSRFVPPYVVS. 6 helical membrane-spanning segments follow: residues 110–130, 166–186, 201–221, 238–258, 265–285, and 295–315; these read WINGANGVVFGLVIANAAVFT, FSHVGATHIILNMMGLCYFGA, YFAGALGGSVFFLSSHALSVI, IGKLGANGPVYAITLLDMLLY, FGLMLRVPVFAGIYSLGLNII, and TLTSLDQLGGVVVAVIAWARI.

Belongs to the peptidase S54 family.

It is found in the plastid. It localises to the chloroplast membrane. Its function is as follows. Rhomboid-type serine protease that catalyzes intramembrane proteolysis. May cleave the plastid translocon component Tic40. This Arabidopsis thaliana (Mouse-ear cress) protein is Rhomboid-like protein 16, chloroplastic.